Reading from the N-terminus, the 421-residue chain is D-amino acid dehydrogenase (421 aa).

3-17 (VIVLGSGVIGVASAY) contributes to the FAD binding site.

This sequence belongs to the DadA oxidoreductase family. It depends on FAD as a cofactor.

The enzyme catalyses a D-alpha-amino acid + A + H2O = a 2-oxocarboxylate + AH2 + NH4(+). Its pathway is amino-acid degradation; D-alanine degradation; NH(3) and pyruvate from D-alanine: step 1/1. Functionally, oxidative deamination of D-amino acids. This Acinetobacter baumannii (strain SDF) protein is D-amino acid dehydrogenase.